We begin with the raw amino-acid sequence, 138 residues long: MLSPKRTKYRKAHKGRIHGNAKGGTTLNFGTFGLKALEPERITARQIEAARRAITRAMKRAGRVWIRIFPDLPVSTKPAEVRMGSGKGSPEYWVARVHPGRVMFEIDGVAPELAREALALGAAKLPIKTKFIVRSVDA.

Residues 1–19 show a composition bias toward basic residues; that stretch reads MLSPKRTKYRKAHKGRIHG. A disordered region spans residues 1–21; it reads MLSPKRTKYRKAHKGRIHGNA.

Belongs to the universal ribosomal protein uL16 family. As to quaternary structure, part of the 50S ribosomal subunit.

Functionally, binds 23S rRNA and is also seen to make contacts with the A and possibly P site tRNAs. The protein is Large ribosomal subunit protein uL16 of Granulibacter bethesdensis (strain ATCC BAA-1260 / CGDNIH1).